Consider the following 137-residue polypeptide: Small ribosomal subunit protein bS6 (137 aa).

The segment at 96–137 is disordered; sequence ITEASPMAKAKDERDTRRSSEERAPRAEAAEEVEESAENTAE. Residues 104-124 show a composition bias toward basic and acidic residues; the sequence is KAKDERDTRRSSEERAPRAEA. The span at 125–137 shows a compositional bias: acidic residues; sequence AEEVEESAENTAE.

The protein belongs to the bacterial ribosomal protein bS6 family.

Functionally, binds together with bS18 to 16S ribosomal RNA. In Shewanella halifaxensis (strain HAW-EB4), this protein is Small ribosomal subunit protein bS6.